Here is a 119-residue protein sequence, read N- to C-terminus: uncharacterized protein (119 aa).

It is found in the mitochondrion. The protein localises to the nucleus. This is an uncharacterized protein from Schizosaccharomyces pombe (strain 972 / ATCC 24843) (Fission yeast).